The chain runs to 147 residues: Hemoglobin subunit epsilon (147 aa).

In terms of domain architecture, Globin spans 3 to 147; the sequence is HFTAEEKAII…VATALAHKYH (145 aa). Phosphoserine is present on residues S14 and S51. Heme b contacts are provided by H64 and H93.

Belongs to the globin family. As to quaternary structure, heterotetramer of two alpha chains and two epsilon chains in early embryonic hemoglobin Gower-2; two zeta chains and two epsilon chains in early embryonic hemoglobin Gower-1. In terms of tissue distribution, red blood cells.

Its function is as follows. The epsilon chain is a beta-type chain of early mammalian embryonic hemoglobin. The polypeptide is Hemoglobin subunit epsilon (HBE1) (Otolemur crassicaudatus (Brown greater galago)).